The primary structure comprises 386 residues: MVMMLKKTVKKGLIGGMSFAKDAGKINWFPGHMAAATRAIRNRLKLSDLVIEVRDARIPLSSANEDLQSQMSAKRRIIALNKKDLANPNVLNKWTRHFESSKQDCIAINAHSRSSVMKLLDLVELKLKEVIAREPTLLVMVVGVPNVGKSALINSIHQIAAARFPVQERLKRATVGPLPGVTQDIAGFKIAHRPSIYVLDSPGVLVPSIPDIETGLKLALSGSVKDSVVGEERIAQYFLAILNIRGTPLHWKYLVEGINEGPHADCIDKPSYNLKDLRHQRTKQPDSSALHYVGDMISEVQRSLYITLSEFDGDTEDENDLECLIEQQFEVLQKALKIPHKASEARLMVSKKFLTLFRTGRLGPFILDDVPETETDHPNSKRVVVL.

The CP-type G domain maps to 37 to 207 (TRAIRNRLKL…VLDSPGVLVP (171 aa)). Residues 55-59 (DARIP) carry the DARXP motif motif. Positions 81–84 (NKKD) are G4. Residues 81–84 (NKKD), 109–110 (NA), and 146–151 (NVGKSA) each bind GTP. The G5 stretch occupies residues 109–111 (NAH). Residues 143-150 (GVPNVGKS) are G1. Residues 180-184 (GVTQD) form a G2 region. Positions 200–203 (DSPG) are G3. G203 provides a ligand contact to GTP.

It belongs to the TRAFAC class YlqF/YawG GTPase family. MTG1 subfamily. In terms of tissue distribution, expressed in seedlings, roots, leaves, stems, inflorescences and siliques.

It localises to the mitochondrion. Its function is as follows. GTPase that may function in mitochondrial ribosome assembly. Involved in a variety of growth processes during vegetative development and promotes growth and cell division in the developing integuments. This is Short integuments 2, mitochondrial from Arabidopsis thaliana (Mouse-ear cress).